The primary structure comprises 254 residues: uncharacterized protein (254 aa).

Helical transmembrane passes span 41–61 (VFVF…IKII), 64–84 (IFQA…EYFF), 91–111 (IYCG…LYIL), 125–145 (ILIG…FVLA), 146–166 (PAAL…LWSF), 172–192 (FILL…IQLL), 204–224 (MLLA…VLTP), and 232–252 (IIMS…LFLL).

This sequence belongs to the TatC family.

It is found in the plastid. The protein localises to the chloroplast membrane. This is an uncharacterized protein from Porphyra purpurea (Red seaweed).